Reading from the N-terminus, the 1238-residue chain is DNA-directed RNA polymerase subunit beta (1238 aa).

The segment at 1187-1238 is disordered; that stretch reads EGREDTPPEEVYEESYEEGFEEEIEELPEDIDFEPDSFDIENDDLDLEDFDI. Acidic residues predominate over residues 1193–1238; it reads PPEEVYEESYEEGFEEEIEELPEDIDFEPDSFDIENDDLDLEDFDI.

The protein belongs to the RNA polymerase beta chain family. As to quaternary structure, the RNAP catalytic core consists of 2 alpha, 1 beta, 1 beta' and 1 omega subunit. When a sigma factor is associated with the core the holoenzyme is formed, which can initiate transcription.

It carries out the reaction RNA(n) + a ribonucleoside 5'-triphosphate = RNA(n+1) + diphosphate. In terms of biological role, DNA-dependent RNA polymerase catalyzes the transcription of DNA into RNA using the four ribonucleoside triphosphates as substrates. The protein is DNA-directed RNA polymerase subunit beta of Thermoanaerobacter pseudethanolicus (strain ATCC 33223 / 39E) (Clostridium thermohydrosulfuricum).